The sequence spans 304 residues: Nucleotide-binding protein SH2124 (304 aa).

19–26 provides a ligand contact to ATP; it reads GLSGAGKS. 70–73 serves as a coordination point for GTP; sequence DLRG.

Belongs to the RapZ-like family.

In terms of biological role, displays ATPase and GTPase activities. The chain is Nucleotide-binding protein SH2124 from Staphylococcus haemolyticus (strain JCSC1435).